We begin with the raw amino-acid sequence, 122 residues long: Large ribosomal subunit protein uL14 (122 aa).

It belongs to the universal ribosomal protein uL14 family. Part of the 50S ribosomal subunit. Forms a cluster with proteins L3 and L19. In the 70S ribosome, L14 and L19 interact and together make contacts with the 16S rRNA in bridges B5 and B8.

In terms of biological role, binds to 23S rRNA. Forms part of two intersubunit bridges in the 70S ribosome. The protein is Large ribosomal subunit protein uL14 of Alkaliphilus metalliredigens (strain QYMF).